Here is a 1557-residue protein sequence, read N- to C-terminus: Ras guanine nucleotide exchange factor K (1557 aa).

The segment covering 1–16 (MEPTINPPVNLPPPVP) has biased composition (pro residues). Disordered stretches follow at residues 1 to 121 (MEPT…SYTV), 146 to 181 (VETL…KLSV), 195 to 238 (LYQQ…SPQL), 283 to 347 (SPLP…GLTP), 558 to 619 (NNNN…DELS), and 881 to 937 (TNNN…QVNH). Composition is skewed to low complexity over residues 17-40 (SRSN…NNTN), 52-63 (SSPSSPSSPSPS), 73-90 (NNNN…NGNV), 102-114 (ISSP…HTSS), 148-161 (TLSS…KTTT), 195-207 (LYQQ…NPNS), and 222-236 (PPSS…STSP). Pro residues predominate over residues 283-310 (SPLPPPPLTIPNKVPPLPMRLPPPPPPQ). Coiled-coil stretches lie at residues 310–338 (QQLD…SNST) and 591–629 (NNNN…EEEL). The span at 311-333 (QLDQMYSNNNQQQQQQQQQQQNN) shows a compositional bias: low complexity. Positions 334 to 343 (ESNSTTTSEG) are enriched in polar residues. Low complexity-rich tracts occupy residues 558–610 (NNNN…NNNN) and 881–928 (TNNN…TPTT). Positions 1058-1177 (LNAEIDAATL…QIRNCILKRT (120 aa)) constitute an N-terminal Ras-GEF domain. The disordered stretch occupies residues 1254–1303 (PSISQNTPSSPSLIPSSPRPITSSSSVSSSTLLKSPLSQQAKSRIPETKT). A compositionally biased stretch (low complexity) spans 1261-1291 (PSSPSLIPSSPRPITSSSSVSSSTLLKSPLS). A Ras-GEF domain is found at 1316–1549 (DDEEIARQLT…YHLSLLKEPR (234 aa)).

Promotes the exchange of Ras-bound GDP by GTP. The chain is Ras guanine nucleotide exchange factor K (gefK) from Dictyostelium discoideum (Social amoeba).